The following is a 57-amino-acid chain: Non-structural protein 3a (57 aa).

The N-terminal stretch at 1–22 (MIQSPTSFLIVLILLWCKLVLS) is a signal peptide.

Involved in resistance to IFN. The protein is Non-structural protein 3a of Avian infectious bronchitis virus (strain Portugal/322/82) (IBV).